A 345-amino-acid polypeptide reads, in one-letter code: Phosphoribosylformylglycinamidine cyclo-ligase (345 aa).

Belongs to the AIR synthase family.

The protein localises to the cytoplasm. The catalysed reaction is 2-formamido-N(1)-(5-O-phospho-beta-D-ribosyl)acetamidine + ATP = 5-amino-1-(5-phospho-beta-D-ribosyl)imidazole + ADP + phosphate + H(+). It participates in purine metabolism; IMP biosynthesis via de novo pathway; 5-amino-1-(5-phospho-D-ribosyl)imidazole from N(2)-formyl-N(1)-(5-phospho-D-ribosyl)glycinamide: step 2/2. This Ligilactobacillus salivarius (strain UCC118) (Lactobacillus salivarius) protein is Phosphoribosylformylglycinamidine cyclo-ligase.